We begin with the raw amino-acid sequence, 222 residues long: Embryonic stem cell-related gene protein (222 aa).

In terms of tissue distribution, expressed only in fetal ovary and in undifferentiated ES cells.

The protein localises to the nucleus. This Homo sapiens (Human) protein is Embryonic stem cell-related gene protein (ESRG).